Here is a 477-residue protein sequence, read N- to C-terminus: Argininosuccinate lyase (477 aa).

Polar residues predominate over residues 1–18 (MTTSSHSSEQPTSTQTSG). The interval 1 to 21 (MTTSSHSSEQPTSTQTSGMWG) is disordered.

The protein belongs to the lyase 1 family. Argininosuccinate lyase subfamily.

It is found in the cytoplasm. It carries out the reaction 2-(N(omega)-L-arginino)succinate = fumarate + L-arginine. Its pathway is amino-acid biosynthesis; L-arginine biosynthesis; L-arginine from L-ornithine and carbamoyl phosphate: step 3/3. In Acinetobacter baylyi (strain ATCC 33305 / BD413 / ADP1), this protein is Argininosuccinate lyase.